We begin with the raw amino-acid sequence, 216 residues long: Large ribosomal subunit protein uL3 (216 aa).

The segment at 134 to 153 is disordered; sequence RATHGNSRSHNVPGSIGMAQ. Position 153 is an N5-methylglutamine (Q153).

This sequence belongs to the universal ribosomal protein uL3 family. As to quaternary structure, part of the 50S ribosomal subunit. Forms a cluster with proteins L14 and L19. In terms of processing, methylated by PrmB.

In terms of biological role, one of the primary rRNA binding proteins, it binds directly near the 3'-end of the 23S rRNA, where it nucleates assembly of the 50S subunit. This Cupriavidus taiwanensis (strain DSM 17343 / BCRC 17206 / CCUG 44338 / CIP 107171 / LMG 19424 / R1) (Ralstonia taiwanensis (strain LMG 19424)) protein is Large ribosomal subunit protein uL3.